We begin with the raw amino-acid sequence, 383 residues long: Flagellum-associated coiled-coil domain-containing protein 1 (383 aa).

The interval 26–79 (PYPLPKHPTGKFKPVLPPPISKEHNSLLSQPGKSTVSPRDKVQSGNTESSKAPS) is disordered. The segment covering 51-77 (SLLSQPGKSTVSPRDKVQSGNTESSKA) has biased composition (polar residues). Coiled-coil stretches lie at residues 125–220 (TDII…YLKS) and 276–359 (KKMN…FQTK). Lysine 354 is modified (N6-acetyllysine).

As to expression, isoform 1 is specific to germ cells of the testis and localizes to the principal piece of the sperm flagellum. Isoform 2 seems to be expressed mainly in somatic cells of the testis, and is not detected in mature spermatozoa (at protein level). Isoform 2 may also be expressed weakly in brain.

It localises to the cytoplasm. The protein localises to the cytoplasmic granule. The protein resides in the cell projection. It is found in the cilium. Its subcellular location is the flagellum. The protein is Flagellum-associated coiled-coil domain-containing protein 1 of Mus musculus (Mouse).